Reading from the N-terminus, the 324-residue chain is tRNA dimethylallyltransferase (324 aa).

17–24 provides a ligand contact to ATP; it reads GPTASGKT. 19 to 24 contacts substrate; that stretch reads TASGKT. Interaction with substrate tRNA regions lie at residues 42–45, 166–170, and 251–256; these read DSAL, QRIQR, and RCVGYR.

This sequence belongs to the IPP transferase family. In terms of assembly, monomer. The cofactor is Mg(2+).

The enzyme catalyses adenosine(37) in tRNA + dimethylallyl diphosphate = N(6)-dimethylallyladenosine(37) in tRNA + diphosphate. In terms of biological role, catalyzes the transfer of a dimethylallyl group onto the adenine at position 37 in tRNAs that read codons beginning with uridine, leading to the formation of N6-(dimethylallyl)adenosine (i(6)A). The polypeptide is tRNA dimethylallyltransferase (Burkholderia pseudomallei (strain 668)).